A 114-amino-acid chain; its full sequence is Protein Tat (114 aa).

Residues M1–N24 are interaction with human CREBBP. Residues M1 to G48 form a transactivation region. Residues C22, C25, and C27 each contribute to the Zn(2+) site. The cysteine-rich stretch occupies residues C22 to C37. K28 carries the N6-acetyllysine; by host PCAF modification. 4 residues coordinate Zn(2+): C30, H33, C34, and C37. The segment at F38–G48 is core. Residues G48 to Q114 are disordered. Residues R49–A56 carry the Nuclear localization signal, RNA-binding (TAR), and protein transduction motif. Positions R49 to E84 are interaction with the host capping enzyme RNGTT. An N6-acetyllysine; by host EP300 and GCN5L2 mark is found at K50 and K51. R52 is subject to Asymmetric dimethylarginine; by host PRMT6. Residue K69 forms a Glycyl lysine isopeptide (Lys-Gly) (interchain with G-Cter in ubiquitin) linkage.

This sequence belongs to the lentiviruses Tat family. In terms of assembly, interacts with host CCNT1. Associates with the P-TEFb complex composed at least of Tat, P-TEFb (CDK9 and CCNT1), TAR RNA, RNA Pol II. Recruits the HATs CREBBP, TAF1/TFIID, EP300, PCAF and GCN5L2. Interacts with host KAT5/Tip60; this interaction targets the latter to degradation. Interacts with the host deacetylase SIRT1. Interacts with host capping enzyme RNGTT; this interaction stimulates RNGTT. Binds to host KDR, and to the host integrins ITGAV/ITGB3 and ITGA5/ITGB1. Interacts with host KPNB1/importin beta-1 without previous binding to KPNA1/importin alpha-1. Interacts with EIF2AK2. Interacts with host nucleosome assembly protein NAP1L1; this interaction may be required for the transport of Tat within the nucleus, since the two proteins interact at the nuclear rim. Interacts with host C1QBP/SF2P32; this interaction involves lysine-acetylated Tat. Interacts with the host chemokine receptors CCR2, CCR3 and CXCR4. Interacts with host DPP4/CD26; this interaction may trigger an anti-proliferative effect. Interacts with host LDLR. Interacts with the host extracellular matrix metalloproteinase MMP1. Interacts with host PRMT6; this interaction mediates Tat's methylation. Interacts with, and is ubiquitinated by MDM2/Hdm2. Interacts with host PSMC3 and HTATIP2. Interacts with STAB1; this interaction may overcome SATB1-mediated repression of IL2 and IL2RA (interleukin) in T cells by binding to the same domain than HDAC1. Interacts (when acetylated) with human CDK13, thereby increasing HIV-1 mRNA splicing and promoting the production of the doubly spliced HIV-1 protein Nef. Interacts with host TBP; this interaction modulates the activity of transcriptional pre-initiation complex. Interacts with host RELA. Interacts with host PLSCR1; this interaction negatively regulates Tat transactivation activity by altering its subcellular distribution. Post-translationally, asymmetrical arginine methylation by host PRMT6 seems to diminish the transactivation capacity of Tat and affects the interaction with host CCNT1. In terms of processing, acetylation by EP300, CREBBP, GCN5L2/GCN5 and PCAF regulates the transactivation activity of Tat. EP300-mediated acetylation of Lys-50 promotes dissociation of Tat from the TAR RNA through the competitive binding to PCAF's bromodomain. In addition, the non-acetylated Tat's N-terminus can also interact with PCAF. PCAF-mediated acetylation of Lys-28 enhances Tat's binding to CCNT1. Lys-50 is deacetylated by SIRT1. Polyubiquitination by host MDM2 does not target Tat to degradation, but activates its transactivation function and fosters interaction with CCNT1 and TAR RNA. Post-translationally, phosphorylated by EIF2AK2 on serine and threonine residues adjacent to the basic region important for TAR RNA binding and function. Phosphorylation of Tat by EIF2AK2 is dependent on the prior activation of EIF2AK2 by dsRNA.

It localises to the host nucleus. The protein localises to the host nucleolus. It is found in the host cytoplasm. Its subcellular location is the secreted. Its function is as follows. Transcriptional activator that increases RNA Pol II processivity, thereby increasing the level of full-length viral transcripts. Recognizes a hairpin structure at the 5'-LTR of the nascent viral mRNAs referred to as the transactivation responsive RNA element (TAR) and recruits the cyclin T1-CDK9 complex (P-TEFb complex) that will in turn hyperphosphorylate the RNA polymerase II to allow efficient elongation. The CDK9 component of P-TEFb and other Tat-activated kinases hyperphosphorylate the C-terminus of RNA Pol II that becomes stabilized and much more processive. Other factors such as HTATSF1/Tat-SF1, SUPT5H/SPT5, and HTATIP2 are also important for Tat's function. Besides its effect on RNA Pol II processivity, Tat induces chromatin remodeling of proviral genes by recruiting the histone acetyltransferases (HATs) CREBBP, EP300 and PCAF to the chromatin. This also contributes to the increase in proviral transcription rate, especially when the provirus integrates in transcriptionally silent region of the host genome. To ensure maximal activation of the LTR, Tat mediates nuclear translocation of NF-kappa-B by interacting with host RELA. Through its interaction with host TBP, Tat may also modulate transcription initiation. Tat can reactivate a latently infected cell by penetrating in it and transactivating its LTR promoter. In the cytoplasm, Tat is thought to act as a translational activator of HIV-1 mRNAs. Extracellular circulating Tat can be endocytosed by surrounding uninfected cells via the binding to several surface receptors such as CD26, CXCR4, heparan sulfate proteoglycans (HSPG) or LDLR. Neurons are rarely infected, but they internalize Tat via their LDLR. Through its interaction with nuclear HATs, Tat is potentially able to control the acetylation-dependent cellular gene expression. Modulates the expression of many cellular genes involved in cell survival, proliferation or in coding for cytokines or cytokine receptors. Tat plays a role in T-cell and neurons apoptosis. Tat induced neurotoxicity and apoptosis probably contribute to neuroAIDS. Circulating Tat also acts as a chemokine-like and/or growth factor-like molecule that binds to specific receptors on the surface of the cells, affecting many cellular pathways. In the vascular system, Tat binds to ITGAV/ITGB3 and ITGA5/ITGB1 integrins dimers at the surface of endothelial cells and competes with bFGF for heparin-binding sites, leading to an excess of soluble bFGF. The protein is Protein Tat of Homo sapiens (Human).